We begin with the raw amino-acid sequence, 147 residues long: Proteinase inhibitor type-2 T (147 aa).

A signal peptide spans 1–25 (MAVHKEVSFVAYLLIVLGMFLYVDA). 2 tandem repeats follow at residues 25-82 (ALGC…PKNP) and 83-142 (KACP…EPKP). Intrachain disulfides connect Cys28-Cys116, Cys32-Cys112, Cys40-Cys122, Cys52-Cys89, Cys55-Cys73, Cys56-Cys85, Cys62-Cys98, and Cys115-Cys133.

This sequence belongs to the protease inhibitor I20 (potato type II proteinase inhibitor) family.

Functionally, inhibitor of trypsin and chymotrypsin. This is Proteinase inhibitor type-2 T (PIN2T) from Solanum tuberosum (Potato).